The sequence spans 568 residues: Potassium-transporting ATPase potassium-binding subunit (568 aa).

The next 10 helical transmembrane spans lie at Met1 to Pro21, Gly60 to Ala80, Ala129 to Ile149, Val174 to Ala194, Ile251 to Leu271, Trp278 to Ala298, Val381 to Ile401, Val420 to Val440, Ile488 to Gly508, and Pro528 to Pro548.

Belongs to the KdpA family. As to quaternary structure, the system is composed of three essential subunits: KdpA, KdpB and KdpC.

Its subcellular location is the cell inner membrane. Its function is as follows. Part of the high-affinity ATP-driven potassium transport (or Kdp) system, which catalyzes the hydrolysis of ATP coupled with the electrogenic transport of potassium into the cytoplasm. This subunit binds the periplasmic potassium ions and delivers the ions to the membrane domain of KdpB through an intramembrane tunnel. This Delftia acidovorans (strain DSM 14801 / SPH-1) protein is Potassium-transporting ATPase potassium-binding subunit.